The chain runs to 374 residues: Patatin-2-Kuras 4 (374 aa).

The signal sequence occupies residues 1–11; sequence MILATTSSTCA. The PNPLA domain occupies 20-217; sequence LSIDGGGIKG…TVGDPALLSL (198 aa). The GXGXXG motif lies at 24-29; it reads GGGIKG. The short motif at 63-67 is the GXSXG element; the sequence is GTSTG. S65 serves as the catalytic Nucleophile. The N-linked (GlcNAc...) asparagine glycan is linked to N103. The Proton acceptor role is filled by D203. The DGA/G signature appears at 203 to 205; that stretch reads DGG. The stretch at 309-372 forms a coiled coil; sequence ENALTGTTTE…DRKKLRANKA (64 aa).

This sequence belongs to the patatin family.

The protein resides in the vacuole. Functionally, probable lipolytic acyl hydrolase (LAH), an activity which is thought to be involved in the response of tubers to pathogens. This chain is Patatin-2-Kuras 4 (pat2-k4), found in Solanum tuberosum (Potato).